The chain runs to 407 residues: Proteasome-activating nucleotidase (407 aa).

Residues 22–67 are a coiled coil; sequence KEKTQIAELESKVLRLELKNKDINRENVQIKKENEILKRELDKLRI. Residues 192-197 and His331 contribute to the ATP site; that span reads GTGKTL. Residues 405-407 form a docks into pockets in the proteasome alpha-ring to cause gate opening region; that stretch reads MYG.

It belongs to the AAA ATPase family. Homohexamer. The hexameric complex has a two-ring architecture resembling a top hat that caps the 20S proteasome core at one or both ends. Upon ATP-binding, the C-terminus of PAN interacts with the alpha-rings of the proteasome core by binding to the intersubunit pockets.

It is found in the cytoplasm. Its function is as follows. ATPase which is responsible for recognizing, binding, unfolding and translocation of substrate proteins into the archaeal 20S proteasome core particle. Is essential for opening the gate of the 20S proteasome via an interaction with its C-terminus, thereby allowing substrate entry and access to the site of proteolysis. Thus, the C-termini of the proteasomal ATPase function like a 'key in a lock' to induce gate opening and therefore regulate proteolysis. Unfolding activity requires energy from ATP hydrolysis, whereas ATP binding alone promotes ATPase-20S proteasome association which triggers gate opening, and supports translocation of unfolded substrates. In Methanococcus maripaludis (strain DSM 14266 / JCM 13030 / NBRC 101832 / S2 / LL), this protein is Proteasome-activating nucleotidase.